We begin with the raw amino-acid sequence, 273 residues long: tRNA (guanine-N(7)-)-methyltransferase (273 aa).

Residues 1–32 (MSATAKKSAAQLQREEEEARKKLKRLSKQGGV) are disordered. Residues glycine 88, 111 to 112 (EI), 150 to 151 (NC), and cysteine 170 each bind S-adenosyl-L-methionine. Aspartate 173 is an active-site residue. An S-adenosyl-L-methionine-binding site is contributed by 248-250 (TEE).

This sequence belongs to the class I-like SAM-binding methyltransferase superfamily. TrmB family. Forms a complex with trm82.

Its subcellular location is the nucleus. It catalyses the reaction guanosine(46) in tRNA + S-adenosyl-L-methionine = N(7)-methylguanosine(46) in tRNA + S-adenosyl-L-homocysteine. The protein operates within tRNA modification; N(7)-methylguanine-tRNA biosynthesis. In terms of biological role, catalyzes the formation of N(7)-methylguanine at position 46 (m7G46) in tRNA. This is tRNA (guanine-N(7)-)-methyltransferase (trm8) from Schizosaccharomyces pombe (strain 972 / ATCC 24843) (Fission yeast).